The sequence spans 277 residues: Putative phosphoenolpyruvate synthase regulatory protein (277 aa).

157–164 lines the ADP pocket; it reads GVSRCGKT.

It belongs to the pyruvate, phosphate/water dikinase regulatory protein family. PSRP subfamily.

It catalyses the reaction [pyruvate, water dikinase] + ADP = [pyruvate, water dikinase]-phosphate + AMP + H(+). The catalysed reaction is [pyruvate, water dikinase]-phosphate + phosphate + H(+) = [pyruvate, water dikinase] + diphosphate. In terms of biological role, bifunctional serine/threonine kinase and phosphorylase involved in the regulation of the phosphoenolpyruvate synthase (PEPS) by catalyzing its phosphorylation/dephosphorylation. The sequence is that of Putative phosphoenolpyruvate synthase regulatory protein from Klebsiella pneumoniae (strain 342).